The primary structure comprises 265 residues: Phosphatidylglycerol--prolipoprotein diacylglyceryl transferase (265 aa).

7 consecutive transmembrane segments (helical) span residues 17-37 (VAVR…VVLG), 57-77 (LLLY…VLFY), 89-109 (ILAV…VLVA), 127-147 (FIAP…FING), 176-196 (QLYQ…VFAA), 201-218 (LRAV…LRFV), and 233-253 (LVPG…VGLA). R140 serves as a coordination point for a 1,2-diacyl-sn-glycero-3-phospho-(1'-sn-glycerol).

The protein belongs to the Lgt family.

It is found in the cell inner membrane. It carries out the reaction L-cysteinyl-[prolipoprotein] + a 1,2-diacyl-sn-glycero-3-phospho-(1'-sn-glycerol) = an S-1,2-diacyl-sn-glyceryl-L-cysteinyl-[prolipoprotein] + sn-glycerol 1-phosphate + H(+). The protein operates within protein modification; lipoprotein biosynthesis (diacylglyceryl transfer). Its function is as follows. Catalyzes the transfer of the diacylglyceryl group from phosphatidylglycerol to the sulfhydryl group of the N-terminal cysteine of a prolipoprotein, the first step in the formation of mature lipoproteins. The chain is Phosphatidylglycerol--prolipoprotein diacylglyceryl transferase from Azoarcus sp. (strain BH72).